We begin with the raw amino-acid sequence, 714 residues long: Epithelial splicing regulatory protein 1 (714 aa).

RRM domains are found at residues 225 to 302 (TVIR…KATG), 326 to 406 (IIVR…KSTA), and 450 to 530 (DCVR…ACSA).

It belongs to the ESRP family.

It localises to the nucleus. In terms of biological role, mRNA splicing factor that regulates the formation of epithelial cell-specific isoforms. Specifically regulates the expression of FGFR2-IIIb, an epithelial cell-specific isoform of fgfr2. Acts by directly binding specific sequences in mRNAs. Binds the GU-rich sequence motifs in the ISE/ISS-3, a cis-element regulatory region present in the mRNA of fgfr2. The polypeptide is Epithelial splicing regulatory protein 1 (esrp1) (Danio rerio (Zebrafish)).